We begin with the raw amino-acid sequence, 222 residues long: Flagellar L-ring protein (222 aa).

An N-terminal signal peptide occupies residues 1-18; that stretch reads MRRPGAAALAAAALALAG. A lipid anchor (N-palmitoyl cysteine) is attached at cysteine 19. Cysteine 19 carries S-diacylglycerol cysteine lipidation.

The protein belongs to the FlgH family. The basal body constitutes a major portion of the flagellar organelle and consists of four rings (L,P,S, and M) mounted on a central rod.

Its subcellular location is the cell outer membrane. It localises to the bacterial flagellum basal body. Its function is as follows. Assembles around the rod to form the L-ring and probably protects the motor/basal body from shearing forces during rotation. In Burkholderia mallei (strain ATCC 23344), this protein is Flagellar L-ring protein.